Here is a 1030-residue protein sequence, read N- to C-terminus: Subtilin biosynthesis protein SpaB (1030 aa).

To S.epidermidis EpiB and L.lactis NisB.

The protein resides in the cell membrane. In terms of biological role, involved in the post-translational modification of the lantibiotic subtilin. In Bacillus subtilis, this protein is Subtilin biosynthesis protein SpaB (spaB).